Here is a 271-residue protein sequence, read N- to C-terminus: Sorting nexin-11 (271 aa).

The 117-residue stretch at 16–132 (VITVRVQDPR…HLFLQSQLSV (117 aa)) folds into the PX domain. A 1,2-diacyl-sn-glycero-3-phospho-(1D-myo-inositol-3-phosphate) contacts are provided by Arg59, Lys85, and Arg99. Residues 135–139 (IEACV) are important for membrane trafficking. The segment at 185–271 (PRSGRRSSPS…PTQLDTAWDK (87 aa)) is disordered. Positions 213–230 (SEGPSSESPTLLPSSSLP) are enriched in low complexity.

This sequence belongs to the sorting nexin family. Monomer. Interacts with TRPV3; this interaction promotes TRPV3 trafficking from the cell membrane to lysosome for degradation.

Its subcellular location is the cell membrane. The protein resides in the endosome. The protein localises to the cytoplasm. Its function is as follows. Phosphoinositide-binding protein involved in protein sorting and membrane trafficking in endosomes. Regulates the levels of TRPV3 by promoting its trafficking from the cell membrane to lysosome for degradation. This is Sorting nexin-11 (Snx11) from Mus musculus (Mouse).